The sequence spans 149 residues: Large ribosomal subunit protein uL15 (149 aa).

Basic residues-rich tracts occupy residues 1–14 and 21–30; these read MPTR…HRGH and RVGKHRKHPG. The disordered stretch occupies residues 1–43; it reads MPTRFSKTRKHRGHVSAGKGRVGKHRKHPGGRGMAGGQHHHRT.

The protein belongs to the universal ribosomal protein uL15 family. In terms of assembly, component of the large ribosomal subunit (LSU). Mature N.crassa ribosomes consist of a small (40S) and a large (60S) subunit. The 40S small subunit contains 1 molecule of ribosomal RNA (18S rRNA) and at least 32 different proteins. The large 60S subunit contains 3 rRNA molecules (26S, 5.8S and 5S rRNA) and at least 42 different proteins.

It localises to the cytoplasm. Its function is as follows. Component of the ribosome, a large ribonucleoprotein complex responsible for the synthesis of proteins in the cell. The small ribosomal subunit (SSU) binds messenger RNAs (mRNAs) and translates the encoded message by selecting cognate aminoacyl-transfer RNA (tRNA) molecules. The large subunit (LSU) contains the ribosomal catalytic site termed the peptidyl transferase center (PTC), which catalyzes the formation of peptide bonds, thereby polymerizing the amino acids delivered by tRNAs into a polypeptide chain. The nascent polypeptides leave the ribosome through a tunnel in the LSU and interact with protein factors that function in enzymatic processing, targeting, and the membrane insertion of nascent chains at the exit of the ribosomal tunnel. In Neurospora crassa (strain ATCC 24698 / 74-OR23-1A / CBS 708.71 / DSM 1257 / FGSC 987), this protein is Large ribosomal subunit protein uL15 (rpl-28).